Here is a 336-residue protein sequence, read N- to C-terminus: G patch domain and ankyrin repeat-containing protein 1 homolog (336 aa).

ANK repeat units follow at residues 123–152 and 156–185; these read FGWT…QVET and SGNT…LEET. The 47-residue stretch at 240–286 folds into the G-patch domain; the sequence is AKNRGLQLMVKQGWDQEHGLGPSQSGRLYPVKTVLRKQRTGLGIEQQ.

The protein is G patch domain and ankyrin repeat-containing protein 1 homolog of Drosophila melanogaster (Fruit fly).